Here is a 352-residue protein sequence, read N- to C-terminus: Glycerol-3-phosphate dehydrogenase [NAD(P)+] (352 aa).

NADPH is bound by residues serine 11, tryptophan 12, arginine 32, and lysine 105. Sn-glycerol 3-phosphate-binding residues include lysine 105, glycine 133, and serine 135. Position 137 (alanine 137) interacts with NADPH. 5 residues coordinate sn-glycerol 3-phosphate: lysine 188, aspartate 241, serine 251, arginine 252, and asparagine 253. Lysine 188 acts as the Proton acceptor in catalysis. Arginine 252 provides a ligand contact to NADPH. NADPH is bound by residues valine 276 and glutamate 278.

Belongs to the NAD-dependent glycerol-3-phosphate dehydrogenase family.

It localises to the cytoplasm. The enzyme catalyses sn-glycerol 3-phosphate + NAD(+) = dihydroxyacetone phosphate + NADH + H(+). It catalyses the reaction sn-glycerol 3-phosphate + NADP(+) = dihydroxyacetone phosphate + NADPH + H(+). It participates in membrane lipid metabolism; glycerophospholipid metabolism. In terms of biological role, catalyzes the reduction of the glycolytic intermediate dihydroxyacetone phosphate (DHAP) to sn-glycerol 3-phosphate (G3P), the key precursor for phospholipid synthesis. The protein is Glycerol-3-phosphate dehydrogenase [NAD(P)+] of Desulfitobacterium hafniense (strain Y51).